Consider the following 397-residue polypeptide: Ubiquitin-like modifier-activating enzyme 5 (397 aa).

5 residues coordinate ATP: Gly-76, Asp-97, Lys-120, Asn-143, and Asn-177. Residues Cys-219 and Cys-222 each coordinate Zn(2+). The Glycyl thioester intermediate role is filled by Cys-243. Cys-296 and Cys-301 together coordinate Zn(2+). The segment at 362-384 is disordered; that stretch reads LAYEPPASTKHSETTSTTAVSDD. Positions 375 to 384 are enriched in low complexity; sequence TTSTTAVSDD.

This sequence belongs to the ubiquitin-activating E1 family. UBA5 subfamily.

Its function is as follows. E1-like enzyme which activates UFM1. This Aedes aegypti (Yellowfever mosquito) protein is Ubiquitin-like modifier-activating enzyme 5.